We begin with the raw amino-acid sequence, 557 residues long: Hydroxylamine reductase (557 aa).

Cys-4, Cys-7, Cys-19, and Cys-26 together coordinate [4Fe-4S] cluster. Hybrid [4Fe-2O-2S] cluster is bound by residues His-253, Glu-277, Cys-321, Cys-408, Cys-436, Cys-461, Glu-495, and Lys-497. Cysteine persulfide is present on Cys-408.

The protein belongs to the HCP family. It depends on [4Fe-4S] cluster as a cofactor. Hybrid [4Fe-2O-2S] cluster is required as a cofactor.

It localises to the cytoplasm. The enzyme catalyses A + NH4(+) + H2O = hydroxylamine + AH2 + H(+). Catalyzes the reduction of hydroxylamine to form NH(3) and H(2)O. This chain is Hydroxylamine reductase, found in Acidithiobacillus ferrooxidans (strain ATCC 53993 / BNL-5-31) (Leptospirillum ferrooxidans (ATCC 53993)).